A 378-amino-acid chain; its full sequence is MFLKAVVLTLSLVAITGARAEVSADQVATVVWDYFSQLSNNAKEAVEHLQQSELTQQLKSVTKGHISALRVIEKGRERNSWEHSRRVGPCEIMGRQVGIFGQPLRVATLPNCDLPVNSVPPNTHLSQAVGPYAEELRTQVNTHAEQLRNQLTSHAQRMQSALRQNVDDLHSSLTPFADELKAKIDQNVEELKGHLTPYTDELKVKIDQNVEELRRSLAPYAQDVQEKLNHQLEGLAFQMKKNAEELKAKISANAEELRQRLAPVAEDVRGKLKDNTAGLHKSLAELSSRLDQQVEEFRRNVGPYGETFNKALLQQVEELRQKLGPYAGDMEDHLSFLEKDLRDKVNSFFSTLQEKESQDTPVALPKQEQEQSAVPLES.

The N-terminal stretch at 1–20 is a signal peptide; that stretch reads MFLKAVVLTLSLVAITGARA. A run of 13 repeats spans residues 33-54, 60-81, 82-98, 110-130, 131-152, 153-174, 175-196, 197-218, 219-240, 241-262, 263-280, 281-302, and 303-324. Residues 33 to 324 are 13 X 22 AA approximate tandem repeats; that stretch reads DYFSQLSNNA…QVEELRQKLG (292 aa). Positions 354-378 are disordered; the sequence is EKESQDTPVALPKQEQEQSAVPLES.

It belongs to the apolipoprotein A1/A4/E family. In terms of assembly, homodimer.

Its subcellular location is the secreted. Functionally, may have a role in chylomicrons and VLDL secretion and catabolism. Required for efficient activation of lipoprotein lipase by ApoC-II; potent activator of LCAT. Apoa-IV is a major component of HDL and chylomicrons. This Canis lupus familiaris (Dog) protein is Apolipoprotein A-IV.